A 132-amino-acid polypeptide reads, in one-letter code: Aspartate 1-decarboxylase (132 aa).

The Schiff-base intermediate with substrate; via pyruvic acid role is filled by serine 25. Pyruvic acid (Ser) is present on serine 25. Residue threonine 57 participates in substrate binding. Catalysis depends on tyrosine 58, which acts as the Proton donor. Residue 73-75 (GAA) participates in substrate binding.

This sequence belongs to the PanD family. Heterooctamer of four alpha and four beta subunits. It depends on pyruvate as a cofactor. In terms of processing, is synthesized initially as an inactive proenzyme, which is activated by self-cleavage at a specific serine bond to produce a beta-subunit with a hydroxyl group at its C-terminus and an alpha-subunit with a pyruvoyl group at its N-terminus.

It is found in the cytoplasm. It catalyses the reaction L-aspartate + H(+) = beta-alanine + CO2. Its pathway is cofactor biosynthesis; (R)-pantothenate biosynthesis; beta-alanine from L-aspartate: step 1/1. Functionally, catalyzes the pyruvoyl-dependent decarboxylation of aspartate to produce beta-alanine. The polypeptide is Aspartate 1-decarboxylase (Pelotomaculum thermopropionicum (strain DSM 13744 / JCM 10971 / SI)).